The following is a 216-amino-acid chain: MPDITIALSKGRIFEDTIPFLEAAGIIPQDDPDTSRKLIIETNRPDVRLVMVRATDVPTYVQYGAADLGVAGKDVLLEHDGVGLYQPLDLKIARCHMMVAVRDGYDYASAVFQGARLRVATKYVKTARSHFAAKGMHVDLIKLYGSMELAPLVDLADAIVDLVSTGGTLKANRLQAVEEIMPISARLIVNQAALKLKNPTIQPLLEAFNAAIPANV.

This sequence belongs to the ATP phosphoribosyltransferase family. Short subfamily. In terms of assembly, heteromultimer composed of HisG and HisZ subunits.

The protein localises to the cytoplasm. The catalysed reaction is 1-(5-phospho-beta-D-ribosyl)-ATP + diphosphate = 5-phospho-alpha-D-ribose 1-diphosphate + ATP. It functions in the pathway amino-acid biosynthesis; L-histidine biosynthesis; L-histidine from 5-phospho-alpha-D-ribose 1-diphosphate: step 1/9. In terms of biological role, catalyzes the condensation of ATP and 5-phosphoribose 1-diphosphate to form N'-(5'-phosphoribosyl)-ATP (PR-ATP). Has a crucial role in the pathway because the rate of histidine biosynthesis seems to be controlled primarily by regulation of HisG enzymatic activity. The chain is ATP phosphoribosyltransferase from Nitrosomonas eutropha (strain DSM 101675 / C91 / Nm57).